A 101-amino-acid polypeptide reads, in one-letter code: Apolipoprotein C-II (101 aa).

A signal peptide spans Met1–Gly22. A propeptide spans Asp23–Gln28 (removed in mature form). The segment at Ala66 to Met74 is lipid binding. The segment at Ser78 to Pro101 is lipoprotein lipase cofactor.

It belongs to the apolipoprotein C2 family. Post-translationally, proapolipoprotein C-II is synthesized as a sialic acid containing glycoprotein which is subsequently desialylated prior to its proteolytic processing. In terms of processing, proapolipoprotein C-II, the major form found in plasma undergoes proteolytic cleavage of its N-terminal hexapeptide to generate the mature form apolipoprotein C-II, which occurs as the minor form in plasma.

It is found in the secreted. Its function is as follows. Component of chylomicrons, very low-density lipoproteins (VLDL), low-density lipoproteins (LDL), and high-density lipoproteins (HDL) in plasma. Plays an important role in lipoprotein metabolism as an activator of lipoprotein lipase, the enzyme which hydrolyzes the triacylglycerols on chylomicrons and VLDL. In Panthera tigris altaica (Siberian tiger), this protein is Apolipoprotein C-II (APOC2).